An 827-amino-acid polypeptide reads, in one-letter code: Striatin homolog (827 aa).

A coiled-coil region spans residues arginine 37–lysine 109. Disordered regions lie at residues lysine 99–asparagine 123, lysine 181–serine 270, serine 311–serine 362, and glutamate 400–methionine 459. Over residues lysine 109–asparagine 123 the composition is skewed to basic and acidic residues. Low complexity-rich tracts occupy residues asparagine 184 to serine 270 and serine 311 to glutamine 334. The span at glutamate 337–lysine 346 shows a compositional bias: polar residues. 3 stretches are compositionally biased toward low complexity: residues glutamine 347–glutamine 356, threonine 416–serine 432, and serine 439–threonine 453. WD repeat units follow at residues serine 495–lysine 534, glycine 548–tyrosine 593, glycine 610–threonine 649, asparagine 709–serine 748, alanine 751–aspartate 790, and lysine 797–asparagine 827.

Belongs to the WD repeat striatin family. As to quaternary structure, part of the core of STRIPAK complexes.

Its subcellular location is the cytoplasm. It is found in the membrane. Functionally, calmodulin-binding scaffolding protein which is the center of the striatin-interacting phosphatase and kinase (STRIPAK) complexes. STRIPAK complexes have critical roles in protein (de)phosphorylation and are regulators of multiple signaling pathways including Hippo, MAPK, nuclear receptor and cytoskeleton remodeling. Different types of STRIPAK complexes are involved in a variety of biological processes such as cell growth, differentiation, apoptosis, metabolism and immune regulation. The chain is Striatin homolog (strn) from Dictyostelium discoideum (Social amoeba).